The following is a 349-amino-acid chain: Sesquiterpene synthase MAC_05714 (349 aa).

D91 and D96 together coordinate Mg(2+). Positions 91-96 match the DDXXXD motif motif; it reads DDLFVD. R184 lines the substrate pocket. Positions 230, 234, and 238 each coordinate Mg(2+).

It belongs to the terpene synthase family. Mg(2+) is required as a cofactor.

The enzyme catalyses (2E,6E)-farnesyl diphosphate + H2O = (+)-corvol ether B + diphosphate. It carries out the reaction (2E,6E)-farnesyl diphosphate + H2O = (+)-corvol ether A + diphosphate. Terpene synthase that catalyzes the conversion of (2E,6E)-farnesyl diphosphate (FPP) into sesquiterpenes which are important for fungi-environment interactions. Produces a mixture consisting of 8 sesquiterpenes including corvol ethers A and B, as well as traces of epizonarene, gamma-cadinene, delta-cadinene, alpha-cadinene, alpha-cadinol, and an unidentified sesquiterpene. Produces both corvol ether A and corvol ether B in similar concentrations. This chain is Sesquiterpene synthase MAC_05714, found in Metarhizium acridum (strain CQMa 102).